The following is a 313-amino-acid chain: Ribosomal RNA small subunit methyltransferase H (313 aa).

Residues 35–37 (GGH), D55, F79, D101, and Q108 contribute to the S-adenosyl-L-methionine site.

It belongs to the methyltransferase superfamily. RsmH family.

The protein resides in the cytoplasm. It carries out the reaction cytidine(1402) in 16S rRNA + S-adenosyl-L-methionine = N(4)-methylcytidine(1402) in 16S rRNA + S-adenosyl-L-homocysteine + H(+). Its function is as follows. Specifically methylates the N4 position of cytidine in position 1402 (C1402) of 16S rRNA. The protein is Ribosomal RNA small subunit methyltransferase H of Klebsiella pneumoniae (strain 342).